A 291-amino-acid polypeptide reads, in one-letter code: MTTLAIDIGGTKLAAALIGADGQIRDRRELPTPASQTPQALRDALSALVSPLQAHAQRVAIASTGIIRDGSLLALNPHNLGGLLHFPLVKTLEQLTNLPTIAINDAQAAAWAEYQALDGDITDMVFITVSTGVGGGVVSGGKLRTGPGGLAGHIGHTLADPHGPACGCGRTGCVEAIASGRGIATAAQGELAGANAKTIFTRAGQGDEQAQQLIHRSARTLARLIADIKATTDCQCVVVGGSVGLAEGYLALVETYLAQEPAAFHVDLLAAHYRHDAGLLGAALLAQGEIL.

ATP-binding positions include 5 to 12 and 132 to 139; these read AIDIGGTK and GVGGGVVS. Zn(2+) contacts are provided by His156, Cys166, Cys168, and Cys173.

It belongs to the ROK (NagC/XylR) family. NanK subfamily. Homodimer.

It carries out the reaction an N-acyl-D-mannosamine + ATP = an N-acyl-D-mannosamine 6-phosphate + ADP + H(+). The protein operates within amino-sugar metabolism; N-acetylneuraminate degradation; D-fructose 6-phosphate from N-acetylneuraminate: step 2/5. Functionally, catalyzes the phosphorylation of N-acetylmannosamine (ManNAc) to ManNAc-6-P. The polypeptide is N-acetylmannosamine kinase (Escherichia coli O1:K1 / APEC).